Reading from the N-terminus, the 186-residue chain is Oligoribonuclease (186 aa).

Residues 12–175 (LIWIDLEMTG…DDIKDSIKEL (164 aa)) enclose the Exonuclease domain. The active site involves Y133.

This sequence belongs to the oligoribonuclease family.

The protein resides in the cytoplasm. Functionally, 3'-to-5' exoribonuclease specific for small oligoribonucleotides. The chain is Oligoribonuclease from Wigglesworthia glossinidia brevipalpis.